The chain runs to 320 residues: tRNA(Ile)-lysidine synthase, chloroplastic (320 aa).

An ATP-binding site is contributed by 31-36 (SGGKDS).

It belongs to the tRNA(Ile)-lysidine synthase family.

Its subcellular location is the plastid. It is found in the chloroplast. The enzyme catalyses cytidine(34) in tRNA(Ile2) + L-lysine + ATP = lysidine(34) in tRNA(Ile2) + AMP + diphosphate + H(+). In terms of biological role, ligates lysine onto the cytidine present at position 34 of the AUA codon-specific tRNA(Ile) that contains the anticodon CAU, in an ATP-dependent manner. Cytidine is converted to lysidine, thus changing the amino acid specificity of the tRNA from methionine to isoleucine. In Gracilaria tenuistipitata var. liui (Red alga), this protein is tRNA(Ile)-lysidine synthase, chloroplastic.